The primary structure comprises 180 residues: Flavodoxin 2 (180 aa).

The Flavodoxin-like domain occupies 4–173 (IGLFFGSNTG…RVAAWLAQIA (170 aa)). FMN is bound by residues 10 to 15 (SNTGKT), threonine 57, glycine 61, aspartate 99, 106 to 108 (NYL), and aspartate 155.

FMN serves as cofactor.

In terms of biological role, flavodoxins are low-potential electron donors to a number of redox enzymes. NifF is the electron donor to nitrogenase, and is thus implicated in nitrogen fixation. Does not function as an electron donor to nitrite reductase. This chain is Flavodoxin 2, found in Azotobacter vinelandii.